A 239-amino-acid chain; its full sequence is MRLFVGLGNPGAKYARNRHNIGFMALDRIAEDHGFGPWRVKFQGQIAEGRLGREKVLLLKPETFMNRSGQSVGEAMRFYKLDSTDITVLHDELDLAPGKVKVKAGGGHAGHNGLRSIHDHIGAAYDRVRLGIGHPGRKEAVAGYVLHDFARADEDWLEDVLRGVSEGAPHLAAGDGARFMNSVALRTAPPRPSTGTGRPPAKTPARAEEPPAPAASPAPATAPLPDARSPLQKLVDRFK.

TRNA is bound at residue tyrosine 14. Histidine 19 serves as the catalytic Proton acceptor. The tRNA site is built by phenylalanine 64, asparagine 66, and asparagine 112. The disordered stretch occupies residues 186–239 (RTAPPRPSTGTGRPPAKTPARAEEPPAPAASPAPATAPLPDARSPLQKLVDRFK). Positions 193–204 (STGTGRPPAKTP) are enriched in low complexity. Positions 210-222 (PPAPAASPAPATA) are enriched in pro residues.

This sequence belongs to the PTH family. As to quaternary structure, monomer.

Its subcellular location is the cytoplasm. The enzyme catalyses an N-acyl-L-alpha-aminoacyl-tRNA + H2O = an N-acyl-L-amino acid + a tRNA + H(+). Its function is as follows. Hydrolyzes ribosome-free peptidyl-tRNAs (with 1 or more amino acids incorporated), which drop off the ribosome during protein synthesis, or as a result of ribosome stalling. Catalyzes the release of premature peptidyl moieties from peptidyl-tRNA molecules trapped in stalled 50S ribosomal subunits, and thus maintains levels of free tRNAs and 50S ribosomes. The polypeptide is Peptidyl-tRNA hydrolase (Ruegeria pomeroyi (strain ATCC 700808 / DSM 15171 / DSS-3) (Silicibacter pomeroyi)).